The primary structure comprises 423 residues: Serine--tRNA ligase (423 aa).

231-233 (TGE) provides a ligand contact to L-serine. 262–264 (RSE) provides a ligand contact to ATP. Glutamate 285 provides a ligand contact to L-serine. 349–352 (EISS) contributes to the ATP binding site. Residue serine 385 coordinates L-serine.

Belongs to the class-II aminoacyl-tRNA synthetase family. Type-1 seryl-tRNA synthetase subfamily. In terms of assembly, homodimer. The tRNA molecule binds across the dimer.

The protein resides in the cytoplasm. It carries out the reaction tRNA(Ser) + L-serine + ATP = L-seryl-tRNA(Ser) + AMP + diphosphate + H(+). The enzyme catalyses tRNA(Sec) + L-serine + ATP = L-seryl-tRNA(Sec) + AMP + diphosphate + H(+). The protein operates within aminoacyl-tRNA biosynthesis; selenocysteinyl-tRNA(Sec) biosynthesis; L-seryl-tRNA(Sec) from L-serine and tRNA(Sec): step 1/1. Catalyzes the attachment of serine to tRNA(Ser). Is also able to aminoacylate tRNA(Sec) with serine, to form the misacylated tRNA L-seryl-tRNA(Sec), which will be further converted into selenocysteinyl-tRNA(Sec). The protein is Serine--tRNA ligase of Coxiella burnetii (strain CbuG_Q212) (Coxiella burnetii (strain Q212)).